Reading from the N-terminus, the 511-residue chain is MDTKYKDDLFRKYVQFHEGKVDTTPGKQSGSDEYLRVAAATLLSLHKVDPLYRFRLIQFYEVVESSLRSLSSSSLSALHCAFSMLETMAINLFLFPWKKEFRSIKTYTGPFVYYVKSTLLEKDIRAILKFMGYEPELGTAYKLKELVESLQVKMVSFELFLAKVECEQMLGIHSQVKDKGYSELDVVTERKSSTEDARGCSDALRRRAESREHLTTSMARVALQKSASERAAKDYYKPRVTKPSRSVDAYDSYWESRKPPSKASLSLRKEPLAMDVGEDLKDEIIRPSPSLLTMSSSPHGSPDDLPSISPINGLGLLRSTYFPTQDDVDLYTDSEPRATYRRQDALRSDIWLVKNDAHSIYHKRSPPTKESALSKCQNCGLSCSSSLCQRCDSVCPSASKPSGFPSKASAHDSLVHGAPMREKYVGQTQGLDRLATVHSKPKPSTTATSRCGFCNRAGATNTCTQCSKVSCDPCLGAYHYDPCCRKSELHKFMPNNQLNYKSTQFSHPVYR.

Residues 77 to 149 (ALHCAFSMLE…AYKLKELVES (73 aa)) enclose the PUB domain. The PIM motif motif lies at 320-337 (TYFPTQDDVDLYTDSEPR).

This sequence belongs to the SPATA2 family. As to quaternary structure, interacts (via the PIM motif) with RNF31/HOIP (via the PUB domain); the interaction is direct. Interacts (via the PUB domain) with CYLD; the interaction is direct. Expressed in the testis and to a lesser extent in the brain, while skeletal muscle and kidney show weak expression.

The protein resides in the cytoplasm. It localises to the nucleus. Bridging factor that mediates the recruitment of CYLD to the LUBAC complex, thereby regulating TNF-alpha-induced necroptosis. Acts as a direct binding intermediate that bridges RNF31/HOIP, the catalytic subunit of the LUBAC complex, and the deubiquitinase (CYLD), thereby recruiting CYLD to the TNF-R1 signaling complex (TNF-RSC). Required to activate the 'Met-1'- (linear) and 'Lys-63'-linked deubiquitinase activities of CYLD. Controls the kinase activity of RIPK1 and TNF-alpha-induced necroptosis by promoting 'Met-1'-linked deubiquitination of RIPK1 by CYLD. The protein is Spermatogenesis-associated protein 2 of Rattus norvegicus (Rat).